A 44-amino-acid polypeptide reads, in one-letter code: Small ribosomal subunit protein eS31 (44 aa).

Zn(2+) contacts are provided by C18, C21, C35, and C38. Residues 18-38 (CPRCGDTVLAEHEDRQHCGKC) form a C4-type zinc finger.

It belongs to the eukaryotic ribosomal protein eS31 family. As to quaternary structure, part of the 30S ribosomal subunit. Requires Zn(2+) as cofactor.

The polypeptide is Small ribosomal subunit protein eS31 (Haloarcula marismortui (strain ATCC 43049 / DSM 3752 / JCM 8966 / VKM B-1809) (Halobacterium marismortui)).